The chain runs to 206 residues: Threonine efflux protein (206 aa).

A helical membrane pass occupies residues 1–21 (MMMLFFTVAMVHIVALMSPGP). The Periplasmic portion of the chain corresponds to 22 to 43 (DFFFVSQTAVSRSRKEAMMGVL). A helical transmembrane segment spans residues 44 to 64 (GITCGVMVWAGVALLGLHLII). The Cytoplasmic segment spans residues 65-66 (EK). Residues 67–87 (MAWLHTIIMVGGGLYLCWMGY) form a helical membrane-spanning segment. The Periplasmic portion of the chain corresponds to 88-149 (QMLRGALKKQ…VGDNVGAAAR (62 aa)). Residues 150–173 (WGIFALITLETLAWFTVVASLFAL) traverse the membrane as a helical segment. The Cytoplasmic segment spans residues 174-206 (PKMRRGYQRLAKWIDGFAGALFAGFGIHLIISR).

This sequence belongs to the Rht family.

The protein resides in the cell inner membrane. Its function is as follows. Conducts the efflux of threonine. In Salmonella typhimurium (strain LT2 / SGSC1412 / ATCC 700720), this protein is Threonine efflux protein (rhtC).